The primary structure comprises 278 residues: 2-dehydro-3-deoxyphosphooctonate aldolase (278 aa).

It belongs to the KdsA family.

It is found in the cytoplasm. The catalysed reaction is D-arabinose 5-phosphate + phosphoenolpyruvate + H2O = 3-deoxy-alpha-D-manno-2-octulosonate-8-phosphate + phosphate. It participates in carbohydrate biosynthesis; 3-deoxy-D-manno-octulosonate biosynthesis; 3-deoxy-D-manno-octulosonate from D-ribulose 5-phosphate: step 2/3. The protein operates within bacterial outer membrane biogenesis; lipopolysaccharide biosynthesis. This chain is 2-dehydro-3-deoxyphosphooctonate aldolase, found in Fusobacterium nucleatum subsp. nucleatum (strain ATCC 25586 / DSM 15643 / BCRC 10681 / CIP 101130 / JCM 8532 / KCTC 2640 / LMG 13131 / VPI 4355).